The sequence spans 148 residues: Leghemoglobin 2 (148 aa).

Residues 2 to 148 enclose the Globin domain; that stretch reads GFTEKQEALV…LSAAIKKAMS (147 aa). Tyr30 is modified (nitrated tyrosine). Residue Ser45 coordinates heme b. Residue Ser45 is modified to Phosphoserine. Residue His63 participates in O2 binding. 3 residues coordinate heme b: Lys66, His95, and Lys98. Tyr136 bears the Nitrated tyrosine mark.

Belongs to the plant globin family. Monomer. Post-translationally, nitrated in effective nodules and particularly in hypoxic conditions; this mechanism may play a protective role in the symbiosis by buffering toxic peroxynitrite NO(2)(-). Nitration level decrease during nodule senescence. Phosphorylation at Ser-45 disrupts the molecular environment of its porphyrin ring oxygen binding pocket, thus leading to a reduced oxygen consumption and to the delivery of oxygen O(2) to symbiosomes. In terms of tissue distribution, stem nodules.

It localises to the cytoplasm. The protein localises to the cytosol. Its subcellular location is the nucleus. Functionally, leghemoglobin that reversibly binds oxygen O(2) through a pentacoordinated heme iron. In stem nodules, facilitates the diffusion of oxygen to the bacteroids while preventing the bacterial nitrogenase from being inactivated by buffering dioxygen, nitric oxide and carbon monoxide, and promoting the formation of reactive oxygen species (ROS, e.g. H(2)O(2)). This role is essential for symbiotic nitrogen fixation (SNF). In Sesbania rostrata, this protein is Leghemoglobin 2.